Here is a 251-residue protein sequence, read N- to C-terminus: MAKDEVGHNFLARLGKTRLRPGGKKATDWLIANGGFSQDKKVLEVACNMGTTAIGLAKQFGCHIEGVDLDENALAKAQANIEANGLQEKIHVQRANAMKLPFEDESFDIVINEAMLTMLPVEAKKKAIAEYFRVLKPNGLLLTHDVMLVGNDHQTILENMRKAINVTVTPLTKDGWKGIFQESGFRNVDTFSGEMTLLSPKGMIYDEGIFGTLKIIRNAMKAENREQFKRMFKTFNDPEHKLHFIAVCSQK.

This is an uncharacterized protein from Haemophilus influenzae (strain ATCC 51907 / DSM 11121 / KW20 / Rd).